Reading from the N-terminus, the 208-residue chain is Holliday junction branch migration complex subunit RuvA (208 aa).

A domain I region spans residues 1–63; sequence MIGMLTGRVE…QDAITLHGFL (63 aa). A domain II region spans residues 64-142; sequence DRDAKKTFLQ…LSQIEGASAQ (79 aa). A flexible linker region spans residues 143-151; that stretch reads AATSKSPVD. The interval 151–208 is domain III; the sequence is DTGTEQVVEGLISLGWRQQDAQQAVAEACAENDIPTPLATDDVPRVLRLALALMDRGR.

It belongs to the RuvA family. Homotetramer. Forms an RuvA(8)-RuvB(12)-Holliday junction (HJ) complex. HJ DNA is sandwiched between 2 RuvA tetramers; dsDNA enters through RuvA and exits via RuvB. An RuvB hexamer assembles on each DNA strand where it exits the tetramer. Each RuvB hexamer is contacted by two RuvA subunits (via domain III) on 2 adjacent RuvB subunits; this complex drives branch migration. In the full resolvosome a probable DNA-RuvA(4)-RuvB(12)-RuvC(2) complex forms which resolves the HJ.

Its subcellular location is the cytoplasm. In terms of biological role, the RuvA-RuvB-RuvC complex processes Holliday junction (HJ) DNA during genetic recombination and DNA repair, while the RuvA-RuvB complex plays an important role in the rescue of blocked DNA replication forks via replication fork reversal (RFR). RuvA specifically binds to HJ cruciform DNA, conferring on it an open structure. The RuvB hexamer acts as an ATP-dependent pump, pulling dsDNA into and through the RuvAB complex. HJ branch migration allows RuvC to scan DNA until it finds its consensus sequence, where it cleaves and resolves the cruciform DNA. This chain is Holliday junction branch migration complex subunit RuvA, found in Bifidobacterium longum (strain DJO10A).